Consider the following 427-residue polypeptide: Serine--tRNA ligase (427 aa).

L-serine is bound at residue 230-232; sequence TSE. ATP is bound by residues 260–262 and valine 276; that span reads RRE. Glutamate 283 lines the L-serine pocket. Position 347-350 (347-350) interacts with ATP; the sequence is ELTS. Position 387 (threonine 387) interacts with L-serine.

This sequence belongs to the class-II aminoacyl-tRNA synthetase family. Type-1 seryl-tRNA synthetase subfamily. In terms of assembly, homodimer. The tRNA molecule binds across the dimer.

It localises to the cytoplasm. The enzyme catalyses tRNA(Ser) + L-serine + ATP = L-seryl-tRNA(Ser) + AMP + diphosphate + H(+). It catalyses the reaction tRNA(Sec) + L-serine + ATP = L-seryl-tRNA(Sec) + AMP + diphosphate + H(+). It participates in aminoacyl-tRNA biosynthesis; selenocysteinyl-tRNA(Sec) biosynthesis; L-seryl-tRNA(Sec) from L-serine and tRNA(Sec): step 1/1. Catalyzes the attachment of serine to tRNA(Ser). Is also able to aminoacylate tRNA(Sec) with serine, to form the misacylated tRNA L-seryl-tRNA(Sec), which will be further converted into selenocysteinyl-tRNA(Sec). The polypeptide is Serine--tRNA ligase (Micrococcus luteus (strain ATCC 4698 / DSM 20030 / JCM 1464 / CCM 169 / CCUG 5858 / IAM 1056 / NBRC 3333 / NCIMB 9278 / NCTC 2665 / VKM Ac-2230) (Micrococcus lysodeikticus)).